Consider the following 78-residue polypeptide: Small ribosomal subunit protein bS20 (78 aa).

Belongs to the bacterial ribosomal protein bS20 family.

Binds directly to 16S ribosomal RNA. The chain is Small ribosomal subunit protein bS20 from Streptococcus pneumoniae serotype 19F (strain G54).